Consider the following 491-residue polypeptide: Acetyl-coenzyme A carboxylase carboxyl transferase subunit beta, chloroplastic (491 aa).

The disordered stretch occupies residues Ala-26–Gly-49. Polar residues predominate over residues Gly-32–Ser-41. In terms of domain architecture, CoA carboxyltransferase N-terminal spans Leu-222 to Arg-491. Zn(2+)-binding residues include Cys-226, Cys-229, Cys-245, and Cys-248. Residues Cys-226–Cys-248 form a C4-type zinc finger.

It belongs to the AccD/PCCB family. In terms of assembly, acetyl-CoA carboxylase is a heterohexamer composed of biotin carboxyl carrier protein, biotin carboxylase and 2 subunits each of ACCase subunit alpha and ACCase plastid-coded subunit beta (accD). Zn(2+) is required as a cofactor.

Its subcellular location is the plastid. The protein resides in the chloroplast stroma. It catalyses the reaction N(6)-carboxybiotinyl-L-lysyl-[protein] + acetyl-CoA = N(6)-biotinyl-L-lysyl-[protein] + malonyl-CoA. The protein operates within lipid metabolism; malonyl-CoA biosynthesis; malonyl-CoA from acetyl-CoA: step 1/1. Functionally, component of the acetyl coenzyme A carboxylase (ACC) complex. Biotin carboxylase (BC) catalyzes the carboxylation of biotin on its carrier protein (BCCP) and then the CO(2) group is transferred by the transcarboxylase to acetyl-CoA to form malonyl-CoA. This chain is Acetyl-coenzyme A carboxylase carboxyl transferase subunit beta, chloroplastic, found in Ceratophyllum demersum (Rigid hornwort).